Consider the following 217-residue polypeptide: Ras-related protein RABA1e (217 aa).

20 to 27 (GDSGVGKS) is a GTP binding site. Positions 42-50 (SKSTIGVEF) match the Effector region motif. GTP contacts are provided by residues 68-72 (DTAGQ), 126-129 (NKAD), and 156-157 (SA). 2 S-geranylgeranyl cysteine lipidation sites follow: cysteine 214 and cysteine 215.

This sequence belongs to the small GTPase superfamily. Rab family.

Its subcellular location is the cell membrane. Its function is as follows. Intracellular vesicle trafficking and protein transport. In Arabidopsis thaliana (Mouse-ear cress), this protein is Ras-related protein RABA1e (RABA1E).